The primary structure comprises 119 residues: Methylglyoxal synthase (119 aa).

The 119-residue stretch at 1 to 119 (MKIALIAHDK…ESAKLIMADI (119 aa)) folds into the MGS-like domain. Substrate contacts are provided by residues histidine 8, lysine 12, 34–37 (TGTT), and 54–55 (SG). Aspartate 60 acts as the Proton donor/acceptor in catalysis. A substrate-binding site is contributed by histidine 87.

This sequence belongs to the methylglyoxal synthase family.

It carries out the reaction dihydroxyacetone phosphate = methylglyoxal + phosphate. Functionally, catalyzes the formation of methylglyoxal from dihydroxyacetone phosphate. The chain is Methylglyoxal synthase from Clostridium perfringens (strain 13 / Type A).